A 314-amino-acid polypeptide reads, in one-letter code: Cyclin-dependent kinase 2 (314 aa).

Residues 8 to 287 (FQRAEKIGEG…AKDALQHAYF (280 aa)) form the Protein kinase domain. Residues 14–22 (IGEGTYGIV) and K37 each bind ATP. T18 carries the post-translational modification Phosphothreonine. Y19 bears the Phosphotyrosine mark. D130 (proton acceptor) is an active-site residue. The residue at position 162 (Y162) is a Phosphotyrosine. T163 bears the Phosphothreonine mark.

Belongs to the protein kinase superfamily. CMGC Ser/Thr protein kinase family. CDC2/CDKX subfamily. Interacts with cyclin CycG.

It catalyses the reaction L-seryl-[protein] + ATP = O-phospho-L-seryl-[protein] + ADP + H(+). The catalysed reaction is L-threonyl-[protein] + ATP = O-phospho-L-threonyl-[protein] + ADP + H(+). The enzyme catalyses [DNA-directed RNA polymerase] + ATP = phospho-[DNA-directed RNA polymerase] + ADP + H(+). In terms of biological role, like Cdk1, could play a key role in the control of the eukaryotic cell cycle. In Drosophila melanogaster (Fruit fly), this protein is Cyclin-dependent kinase 2.